The primary structure comprises 192 residues: dCTP deaminase, dUMP-forming (192 aa).

Residues 101 to 106 (KSSLGR), Asp-119, 127 to 129 (TLE), Gln-148, Tyr-162, and Gln-174 each bind dCTP. The Proton donor/acceptor role is filled by Glu-129. A disordered region spans residues 171–192 (YQGQRGPTPSRSWQSWHTWPTR).

The protein belongs to the dCTP deaminase family. In terms of assembly, homotrimer.

It catalyses the reaction dCTP + 2 H2O = dUMP + NH4(+) + diphosphate. Its pathway is pyrimidine metabolism; dUMP biosynthesis; dUMP from dCTP: step 1/1. In terms of biological role, bifunctional enzyme that catalyzes both the deamination of dCTP to dUTP and the hydrolysis of dUTP to dUMP without releasing the toxic dUTP intermediate. This Salinispora arenicola (strain CNS-205) protein is dCTP deaminase, dUMP-forming.